Consider the following 588-residue polypeptide: Acid beta-fructofuranosidase 1, vacuolar (588 aa).

Topologically, residues 1 to 31 (MDTSTSAYAPLPGEDPLFSGHPPASLRRSWK) are cytoplasmic. Positions 1–115 (MDTSTSAYAP…LSYNWTNAMF (115 aa)) are cleaved as a propeptide — removed in mature form. A helical; Signal-anchor for type II membrane protein membrane pass occupies residues 32 to 52 (GFAVIFASVLFLLSLVGLIIH). Topologically, residues 53–588 (QGPQQPPDVM…LRALRKEVGR (536 aa)) are lumenal. The segment at 57–86 (QPPDVMPDKQDEHHHPQSTTPASETTASWE) is disordered. Residues 62–71 (MPDKQDEHHH) are compositionally biased toward basic and acidic residues. Residues 73 to 84 (QSTTPASETTAS) show a composition bias toward polar residues. Substrate contacts are provided by residues 130 to 133 (WMND), Gln-149, and Trp-157. Asp-133 is an active-site residue. Asn-159 carries an N-linked (GlcNAc...) asparagine glycan. 192–193 (WS) lines the substrate pocket. N-linked (GlcNAc...) asparagine glycosylation is present at Asn-226. Substrate contacts are provided by residues 256-257 (RD), Glu-311, and Asp-344. A disulfide bridge connects residues Cys-499 and Cys-545.

The protein belongs to the glycosyl hydrolase 32 family. As to quaternary structure, monomer. May be present in two forms, a 70 kDa monomer and a heterodimer of the 30 kDa and 38 kDa subunits. The ratio of the levels of the two forms within cells appears to be regulated developmentally. In terms of processing, glycosylated. Expressed in buds, stems, roots and leaves. Expressed in the epidermal cells of young leaves and of primordial leaves.

Its subcellular location is the membrane. It localises to the vacuole lumen. It catalyses the reaction Hydrolysis of terminal non-reducing beta-D-fructofuranoside residues in beta-D-fructofuranosides.. Acidic vacuolar invertase involved in light-induced bud burst. This is Acid beta-fructofuranosidase 1, vacuolar from Rosa hybrid cultivar.